The sequence spans 100 residues: Large ribosomal subunit protein eL21 (100 aa).

The span at 1–21 (MVKRTHGYRYKSRKLLRKKPR) shows a compositional bias: basic residues. The disordered stretch occupies residues 1 to 22 (MVKRTHGYRYKSRKLLRKKPRE).

It belongs to the eukaryotic ribosomal protein eL21 family.

The polypeptide is Large ribosomal subunit protein eL21 (Pyrobaculum neutrophilum (strain DSM 2338 / JCM 9278 / NBRC 100436 / V24Sta) (Thermoproteus neutrophilus)).